Consider the following 498-residue polypeptide: Glycerol kinase (498 aa).

Thr12 serves as a coordination point for ADP. The ATP site is built by Thr12, Thr13, and Ser14. Thr12 contributes to the sn-glycerol 3-phosphate binding site. Arg16 lines the ADP pocket. Residues Arg82, Glu83, Tyr134, and Asp241 each coordinate sn-glycerol 3-phosphate. Residues Arg82, Glu83, Tyr134, Asp241, and Gln242 each coordinate glycerol. 2 residues coordinate ADP: Thr263 and Gly310. Positions 263, 310, 314, and 411 each coordinate ATP. Positions 411 and 415 each coordinate ADP.

This sequence belongs to the FGGY kinase family.

It carries out the reaction glycerol + ATP = sn-glycerol 3-phosphate + ADP + H(+). It participates in polyol metabolism; glycerol degradation via glycerol kinase pathway; sn-glycerol 3-phosphate from glycerol: step 1/1. Inhibited by fructose 1,6-bisphosphate (FBP). Its function is as follows. Key enzyme in the regulation of glycerol uptake and metabolism. Catalyzes the phosphorylation of glycerol to yield sn-glycerol 3-phosphate. The polypeptide is Glycerol kinase (Janthinobacterium sp. (strain Marseille) (Minibacterium massiliensis)).